Reading from the N-terminus, the 238-residue chain is Ribonuclease PH (238 aa).

Residues Arg-86 and 124 to 126 contribute to the phosphate site; that span reads GTR.

The protein belongs to the RNase PH family. Homohexameric ring arranged as a trimer of dimers.

It catalyses the reaction tRNA(n+1) + phosphate = tRNA(n) + a ribonucleoside 5'-diphosphate. Functionally, phosphorolytic 3'-5' exoribonuclease that plays an important role in tRNA 3'-end maturation. Removes nucleotide residues following the 3'-CCA terminus of tRNAs; can also add nucleotides to the ends of RNA molecules by using nucleoside diphosphates as substrates, but this may not be physiologically important. Probably plays a role in initiation of 16S rRNA degradation (leading to ribosome degradation) during starvation. In Nitrosospira multiformis (strain ATCC 25196 / NCIMB 11849 / C 71), this protein is Ribonuclease PH.